The chain runs to 340 residues: N-acetyl-gamma-glutamyl-phosphate reductase (340 aa).

Residue Cys147 is part of the active site.

Belongs to the NAGSA dehydrogenase family. Type 1 subfamily.

It is found in the cytoplasm. The catalysed reaction is N-acetyl-L-glutamate 5-semialdehyde + phosphate + NADP(+) = N-acetyl-L-glutamyl 5-phosphate + NADPH + H(+). The protein operates within amino-acid biosynthesis; L-arginine biosynthesis; N(2)-acetyl-L-ornithine from L-glutamate: step 3/4. Catalyzes the NADPH-dependent reduction of N-acetyl-5-glutamyl phosphate to yield N-acetyl-L-glutamate 5-semialdehyde. The protein is N-acetyl-gamma-glutamyl-phosphate reductase of Lactococcus lactis subsp. lactis (strain IL1403) (Streptococcus lactis).